Reading from the N-terminus, the 404-residue chain is Phosphopentomutase (404 aa).

Mn(2+) contacts are provided by Asp10, Asp303, His308, Asp344, His345, and His356.

The protein belongs to the phosphopentomutase family. It depends on Mn(2+) as a cofactor.

It localises to the cytoplasm. It carries out the reaction 2-deoxy-alpha-D-ribose 1-phosphate = 2-deoxy-D-ribose 5-phosphate. The catalysed reaction is alpha-D-ribose 1-phosphate = D-ribose 5-phosphate. Its pathway is carbohydrate degradation; 2-deoxy-D-ribose 1-phosphate degradation; D-glyceraldehyde 3-phosphate and acetaldehyde from 2-deoxy-alpha-D-ribose 1-phosphate: step 1/2. Isomerase that catalyzes the conversion of deoxy-ribose 1-phosphate (dRib-1-P) and ribose 1-phosphate (Rib-1-P) to deoxy-ribose 5-phosphate (dRib-5-P) and ribose 5-phosphate (Rib-5-P), respectively. This is Phosphopentomutase from Shewanella oneidensis (strain ATCC 700550 / JCM 31522 / CIP 106686 / LMG 19005 / NCIMB 14063 / MR-1).